The following is a 1036-amino-acid chain: Mitogen-activated protein kinase kinase kinase 21 (1036 aa).

The tract at residues 1–36 (MALRGAAGATDTPVSSAGGAPGGSASSSSTSSGGSA) is disordered. The span at 15-36 (SSAGGAPGGSASSSSTSSGGSA) shows a compositional bias: low complexity. The SH3 domain maps to 38 to 102 (AGAGLWAALY…PANYVAPCRP (65 aa)). Residues 124–401 (LELKELIGAG…ALILEQLTAI (278 aa)) enclose the Protein kinase domain. Residues 130–138 (IGAGGFGQV) and Lys-151 each bind ATP. Asp-263 acts as the Proton acceptor in catalysis. Thr-299 carries the post-translational modification Phosphothreonine; by autocatalysis. Ser-303 is modified (phosphoserine; by autocatalysis and MAP4K1). Leucine-zipper stretches follow at residues 425–446 (IQQM…EEEL) and 460–481 (LKRR…ELNI). Residues 517 to 551 (SDFQHKITVQASPNLDKRRSLNSSSSSPPSSPTMM) form a disordered region. Phosphoserine occurs at positions 528, 543, and 547. Phosphothreonine is present on Thr-592. Ser-614 is modified (phosphoserine). The segment covering 748–763 (AEEPLPKEEKKKREGI) has biased composition (basic and acidic residues). Disordered stretches follow at residues 748-791 (AEEP…SSPP) and 923-954 (PHSH…RSRS).

The protein belongs to the protein kinase superfamily. STE Ser/Thr protein kinase family. MAP kinase kinase kinase subfamily. As to quaternary structure, homodimer. Interacts with TLR4. It depends on Mg(2+) as a cofactor. In terms of processing, autophosphorylation on serine and threonine residues within the activation loop plays a role in enzyme activation.

The catalysed reaction is L-seryl-[protein] + ATP = O-phospho-L-seryl-[protein] + ADP + H(+). The enzyme catalyses L-threonyl-[protein] + ATP = O-phospho-L-threonyl-[protein] + ADP + H(+). Its activity is regulated as follows. Homodimerization via the leucine zipper domains is required for autophosphorylation and subsequent activation. Negative regulator of TLR4 signaling. Does not activate JNK1/MAPK8 pathway, p38/MAPK14, nor ERK2/MAPK1 pathways. The sequence is that of Mitogen-activated protein kinase kinase kinase 21 from Homo sapiens (Human).